A 472-amino-acid chain; its full sequence is Eukaryotic translation initiation factor 2 subunit 3 (472 aa).

Ala-2 is subject to N-acetylalanine; partial. Residue Ser-16 is modified to Phosphoserine. The 210-residue stretch at Gln-39–Arg-248 folds into the tr-type G domain. The tract at residues Gly-48 to Ser-55 is G1. Ala-51–Thr-56 serves as a coordination point for GTP. Residues Asn-76 to Lys-80 form a G2 region. The interval Asp-134–Gly-137 is G3. Residues Asn-190–Asp-193 and Ser-225–Gln-227 contribute to the GTP site. Residues Asn-190–Asp-193 are G4. The segment at Ser-225–Gln-227 is G5. The interval Gly-457–Val-469 is interacts with CDC123.

The protein belongs to the TRAFAC class translation factor GTPase superfamily. Classic translation factor GTPase family. EIF2G subfamily. In terms of assembly, eukaryotic translation initiation factor 2 eIF2 is a heterotrimeric complex composed of an alpha (EIF2S1), a beta (EIF2S2) and a gamma (EIF2S3) chain. eIF2 is member of the 43S pre-initiation complex (43S PIC). Interacts (via C-terminus) with CDC123; the interaction is direct. Expressed in testis, brain, liver and muscle.

The protein resides in the cytoplasm. It is found in the cytosol. It catalyses the reaction GTP + H2O = GDP + phosphate + H(+). Member of the eIF2 complex that functions in the early steps of protein synthesis by forming a ternary complex with GTP and initiator tRNA. This complex binds to a 40S ribosomal subunit, followed by mRNA binding to form the 43S pre-initiation complex (43S PIC). Junction of the 60S ribosomal subunit to form the 80S initiation complex is preceded by hydrolysis of the GTP bound to eIF2 and release of an eIF2-GDP binary complex. In order for eIF2 to recycle and catalyze another round of initiation, the GDP bound to eIF2 must exchange with GTP by way of a reaction catalyzed by eIF-2B. This chain is Eukaryotic translation initiation factor 2 subunit 3 (EIF2S3), found in Homo sapiens (Human).